The primary structure comprises 254 residues: Dihydroorotate dehydrogenase B (NAD(+)), electron transfer subunit (254 aa).

Residues 1-99 (MLQTEMKVIQ…LGPLGKGFDI (99 aa)) form the FAD-binding FR-type domain. FAD contacts are provided by residues 50–53 (RPIS), 67–69 (LYR), and 74–75 (GT). [2Fe-2S] cluster-binding residues include C218, C223, C226, and C241.

The protein belongs to the PyrK family. In terms of assembly, heterotetramer of 2 PyrK and 2 PyrD type B subunits. The cofactor is [2Fe-2S] cluster. Requires FAD as cofactor.

Its pathway is pyrimidine metabolism; UMP biosynthesis via de novo pathway; orotate from (S)-dihydroorotate (NAD(+) route): step 1/1. Functionally, responsible for channeling the electrons from the oxidation of dihydroorotate from the FMN redox center in the PyrD type B subunit to the ultimate electron acceptor NAD(+). This Listeria monocytogenes serotype 4b (strain F2365) protein is Dihydroorotate dehydrogenase B (NAD(+)), electron transfer subunit.